A 228-amino-acid polypeptide reads, in one-letter code: MPLYSGDKISIGKFVIGNPMPIVVTSVFYEDVSTFVERLQTKVLSDKNLYEIRFDMFTEREISDEEELISAMREMDIDYIFTYRGKDARKYYETAIRKMAPAVDIDMDLIGKLEAKPTVTKVIGSYHTSDSEAMMSALDRMIDSDVDMVKVACSYSEDQEFLGDLKRIIDIRKNRRKPIAYVPMGRTFWRALAGYYVSDIVYAMADRPTAYGQPPADYYYQAFKALFY.

Residues Ser26, Glu51–Arg53, and Arg84 contribute to the 3-dehydroquinate site. Catalysis depends on His127, which acts as the Proton donor/acceptor. The active-site Schiff-base intermediate with substrate is the Lys150. 3-dehydroquinate contacts are provided by Arg190, Thr209, and Gln213.

This sequence belongs to the type-I 3-dehydroquinase family. In terms of assembly, homodimer.

It carries out the reaction 3-dehydroquinate = 3-dehydroshikimate + H2O. It functions in the pathway metabolic intermediate biosynthesis; chorismate biosynthesis; chorismate from D-erythrose 4-phosphate and phosphoenolpyruvate: step 3/7. Functionally, involved in the third step of the chorismate pathway, which leads to the biosynthesis of aromatic amino acids. Catalyzes the cis-dehydration of 3-dehydroquinate (DHQ) and introduces the first double bond of the aromatic ring to yield 3-dehydroshikimate. The polypeptide is 3-dehydroquinate dehydratase (Thermoplasma acidophilum (strain ATCC 25905 / DSM 1728 / JCM 9062 / NBRC 15155 / AMRC-C165)).